The following is a 505-amino-acid chain: ATP synthase subunit alpha (505 aa).

170-177 (GDRQTGKS) lines the ATP pocket.

The protein belongs to the ATPase alpha/beta chains family. In terms of assembly, F-type ATPases have 2 components, CF(1) - the catalytic core - and CF(0) - the membrane proton channel. CF(1) has five subunits: alpha(3), beta(3), gamma(1), delta(1), epsilon(1). CF(0) has four main subunits: a(1), b(1), b'(1) and c(9-12).

The protein resides in the cellular thylakoid membrane. It catalyses the reaction ATP + H2O + 4 H(+)(in) = ADP + phosphate + 5 H(+)(out). Its function is as follows. Produces ATP from ADP in the presence of a proton gradient across the membrane. The alpha chain is a regulatory subunit. The protein is ATP synthase subunit alpha of Prochlorococcus marinus (strain MIT 9312).